Here is a 445-residue protein sequence, read N- to C-terminus: Alpha-1,3-mannosyl-glycoprotein 2-beta-N-acetylglucosaminyltransferase (445 aa).

Residues 1 to 6 (MLKKQS) lie on the Cytoplasmic side of the membrane. The chain crosses the membrane as a helical; Signal-anchor for type II membrane protein span at residues 7–29 (AGLVLWGAILFVAWNALLLLFFW). At 30 to 445 (TRPAPGRPPS…TWEGYDPSWN (416 aa)) the chain is on the lumenal side. Cysteines 113 and 143 form a disulfide. Substrate is bound by residues Arg-115, Asp-142, His-188, and Asp-210. Mn(2+) is bound at residue Asp-211. Cys-237 and Cys-303 are oxidised to a cystine. Asp-289 functions as the Proton acceptor in the catalytic mechanism. Ser-320 provides a ligand contact to substrate.

It belongs to the glycosyltransferase 13 family. As to quaternary structure, interacts with MGAT4D. Interacts with BRI3 (isoforms 1 and 2); the interaction with isoform 2 is weaker than with isoform 1. It depends on Mn(2+) as a cofactor.

Its subcellular location is the golgi apparatus membrane. It is found in the cytoplasm. The protein localises to the perinuclear region. It carries out the reaction N(4)-(alpha-D-Man-(1-&gt;3)-[alpha-D-Man-(1-&gt;3)-[alpha-D-Man-(1-&gt;6)]-alpha-D-Man-(1-&gt;6)]-beta-D-Man-(1-&gt;4)-beta-D-GlcNAc-(1-&gt;4)-beta-D-GlcNAc)-L-asparaginyl-[protein] (N-glucan mannose isomer 5A1,2) + UDP-N-acetyl-alpha-D-glucosamine = N(4)-{beta-D-GlcNAc-(1-&gt;2)-alpha-D-Man-(1-&gt;3)-[alpha-D-Man-(1-&gt;3)-[alpha-D-Man-(1-&gt;6)]-alpha-D-Man-(1-&gt;6)]-beta-D-Man-(1-&gt;4)-beta-D-GlcNAc-(1-&gt;4)-beta-D-GlcNAc}-L-asparaginyl-[protein] + UDP + H(+). Its pathway is protein modification; protein glycosylation. Its function is as follows. Initiates complex N-linked carbohydrate formation. Essential for the conversion of high-mannose to hybrid and complex N-glycans. This chain is Alpha-1,3-mannosyl-glycoprotein 2-beta-N-acetylglucosaminyltransferase (MGAT1), found in Homo sapiens (Human).